Reading from the N-terminus, the 338-residue chain is Formamidase (338 aa).

One can recognise a CN hydrolase domain in the interval 14–260 (LLIAAIQYPV…WEIVTAELFP (247 aa)). Glu-60 acts as the Proton acceptor in catalysis. Lys-133 acts as the Proton donor in catalysis. The Nucleophile role is filled by Cys-166.

This sequence belongs to the carbon-nitrogen hydrolase superfamily. Aliphatic amidase family.

The enzyme catalyses formamide + H2O = formate + NH4(+). Functionally, is an aliphatic amidase with a restricted substrate specificity, as it only hydrolyzes formamide. The chain is Formamidase from Photorhabdus laumondii subsp. laumondii (strain DSM 15139 / CIP 105565 / TT01) (Photorhabdus luminescens subsp. laumondii).